A 360-amino-acid chain; its full sequence is DNA replication and repair protein RecF (360 aa).

30–37 (GANGSGKT) serves as a coordination point for ATP.

Belongs to the RecF family.

It is found in the cytoplasm. Its function is as follows. The RecF protein is involved in DNA metabolism; it is required for DNA replication and normal SOS inducibility. RecF binds preferentially to single-stranded, linear DNA. It also seems to bind ATP. This chain is DNA replication and repair protein RecF, found in Acinetobacter baumannii (strain SDF).